The sequence spans 258 residues: MLAKRIIPCLDVRDGQVVKGVQFRNHEIIGDIVPLAKRYAEEGADELVFYDITASSDGRVVDKSWVARVAEVIDIPFCVAGGIKSAEDAAKILSFGADKISINSPALADPELITRLADRFGVQCIVVGIDTWFDDATGKYHVNQYTGDESRTRVTQWETLDWVQEVQKRGAGEIVLNMMNQDGVRNGYDLEQLKKVRAVCRVPMIASGGAGTMEHFLEAFRDADVDGALAASVFHKQIINIGELKTYLATQGVEIRLC.

Active-site residues include D11 and D130.

It belongs to the HisA/HisF family. In terms of assembly, heterodimer of HisH and HisF.

Its subcellular location is the cytoplasm. The catalysed reaction is 5-[(5-phospho-1-deoxy-D-ribulos-1-ylimino)methylamino]-1-(5-phospho-beta-D-ribosyl)imidazole-4-carboxamide + L-glutamine = D-erythro-1-(imidazol-4-yl)glycerol 3-phosphate + 5-amino-1-(5-phospho-beta-D-ribosyl)imidazole-4-carboxamide + L-glutamate + H(+). It participates in amino-acid biosynthesis; L-histidine biosynthesis; L-histidine from 5-phospho-alpha-D-ribose 1-diphosphate: step 5/9. In terms of biological role, IGPS catalyzes the conversion of PRFAR and glutamine to IGP, AICAR and glutamate. The HisF subunit catalyzes the cyclization activity that produces IGP and AICAR from PRFAR using the ammonia provided by the HisH subunit. This chain is Imidazole glycerol phosphate synthase subunit HisF, found in Enterobacter sp. (strain 638).